Consider the following 205-residue polypeptide: Inactive ribonuclease-like protein 9 (205 aa).

An N-terminal signal peptide occupies residues 1 to 26 (MMRTLITIHPLPLLLLLQQLLQPVQF). Disulfide bonds link cysteine 98–cysteine 153, cysteine 116–cysteine 168, and cysteine 123–cysteine 130. N-linked (GlcNAc...) asparagine glycans are attached at residues asparagine 131 and asparagine 143.

The protein belongs to the pancreatic ribonuclease family.

Its subcellular location is the secreted. Does not exhibit any ribonuclease activity. The protein is Inactive ribonuclease-like protein 9 (RNASE9) of Gorilla gorilla gorilla (Western lowland gorilla).